Here is a 361-residue protein sequence, read N- to C-terminus: tRNA-specific 2-thiouridylase MnmA (361 aa).

Residues 6-13 (LVSGGVDS) and isoleucine 32 contribute to the ATP site. The segment at 93–95 (NPD) is interaction with target base in tRNA. Cysteine 98 serves as the catalytic Nucleophile. A disulfide bond links cysteine 98 and cysteine 193. Glycine 121 contributes to the ATP binding site. Residues 143–145 (KDQ) form an interaction with tRNA region. Residue cysteine 193 is the Cysteine persulfide intermediate of the active site.

Belongs to the MnmA/TRMU family.

Its subcellular location is the cytoplasm. The enzyme catalyses S-sulfanyl-L-cysteinyl-[protein] + uridine(34) in tRNA + AH2 + ATP = 2-thiouridine(34) in tRNA + L-cysteinyl-[protein] + A + AMP + diphosphate + H(+). Its function is as follows. Catalyzes the 2-thiolation of uridine at the wobble position (U34) of tRNA, leading to the formation of s(2)U34. In Porphyromonas gingivalis (strain ATCC BAA-308 / W83), this protein is tRNA-specific 2-thiouridylase MnmA.